Consider the following 862-residue polypeptide: MDLPKAYDPKSVEPKWAEKWAKNPFVANPKSGKPPFVIFMPPPNVTGSLHMGHALDNSLQDALIRYKRMRGFEAVWLPGTDHAGIATQVVVERLLLKEGKTRHDLGREKFLERVWQWKEESGGTILKQLKRLGASADWSREAFTMDEKRSRAVRYAFSRYYHEGLAYRAPRLVNWCPRCETTLSDLEVETEPTPGKLYTLRYEVEGGGFIAIATVRPETVFADQAIAVHPEDERYRHLIGKRARIPLTEVWIPILADPAVEKDFGTGALKVTPAHDPLDYEIGERHGLEPVSVINLEGRMEGERVPEALRGLDRFEARRKAVELFREAGHLVKEEDYTIALATCSRCGTPIEYAIFPQWWLRMKPLAEEVLKGLRRGDIAFVPERWKKVNIDWLENVKDWNISRQLWWGHQIPAWYCEDCQAVNVPKPERYLEDPTSCEACGSPRLKRDEDVFDTWFSSALWPLSTLGWPEETEDLKAFYPGDVLVTGYDILFLWVSRMEVSGYHFMGERPFKTVLLHGLVLDEKGQKMSKSKGNVIDPLEMVERYGADALRFALTYLATGGQDIRLDLRWLEMARNFANKLYNAARFVLLSREGFQAKEDTPTLADRFMRSRLSQGVEEITALYEALDLAQAAREVYELVWSEFCDWYLEAAKPALKAGNAHTLRTLEEVLAVLLKLLHPMMPFLTSELYQALTGKEELALEAWPEPGGRDEEAERAFEALKQAVTAVRALKAEAGLPPAQEVRVYLEGETAPVGENLEVFRFLARADLLPERPAKALVKAMPRVTARMPLEGLLDVEEWRRRQEKRLKELLALAERSQRKLASPGFREKAPKEVVEAEEARLRENLEQAERIREALSQIG.

The 'HIGH' region signature appears at Pro-43 to His-53. Residues Cys-176, Cys-179, Cys-344, Cys-347, Cys-417, Cys-420, Cys-438, and Cys-441 each coordinate Zn(2+). The 'KMSKS' region signature appears at Lys-528–Ser-532. Lys-531 contributes to the ATP binding site. Residues Arg-802 to Gly-862 are a coiled coil.

Belongs to the class-I aminoacyl-tRNA synthetase family. ValS type 1 subfamily. Monomer. Zn(2+) is required as a cofactor.

The protein resides in the cytoplasm. It carries out the reaction tRNA(Val) + L-valine + ATP = L-valyl-tRNA(Val) + AMP + diphosphate. Functionally, catalyzes the attachment of valine to tRNA(Val). As ValRS can inadvertently accommodate and process structurally similar amino acids such as threonine, to avoid such errors, it has a 'posttransfer' editing activity that hydrolyzes mischarged Thr-tRNA(Val) in a tRNA-dependent manner. The polypeptide is Valine--tRNA ligase (Thermus thermophilus (strain ATCC BAA-163 / DSM 7039 / HB27)).